A 112-amino-acid chain; its full sequence is Dolichyl-diphosphooligosaccharide--protein glycosyltransferase subunit DAD1 (112 aa).

At 1–27 (MVELSSVISKFYNDYVQNTPKKLKLVD) the chain is on the cytoplasmic side. A helical transmembrane segment spans residues 28 to 48 (IYLGYILLTGIIQFVYCCLVG). Over 49–51 (TFP) the chain is Lumenal. A helical transmembrane segment spans residues 52–72 (FNSFLSGFISTVSCFVLAVCL). The Cytoplasmic portion of the chain corresponds to 73–91 (RLQANPQNKSVFAGISPER). A helical membrane pass occupies residues 92–112 (GFADFIFAHVILHLVVMNFIG).

This sequence belongs to the DAD/OST2 family. In terms of assembly, component of the oligosaccharyltransferase (OST) complex.

Its subcellular location is the endoplasmic reticulum membrane. It functions in the pathway protein modification; protein glycosylation. Functionally, subunit of the oligosaccharyl transferase (OST) complex that catalyzes the initial transfer of a defined glycan (Glc(3)Man(9)GlcNAc(2) in eukaryotes) from the lipid carrier dolichol-pyrophosphate to an asparagine residue within an Asn-X-Ser/Thr consensus motif in nascent polypeptide chains, the first step in protein N-glycosylation. N-glycosylation occurs cotranslationally and the complex associates with the Sec61 complex at the channel-forming translocon complex that mediates protein translocation across the endoplasmic reticulum (ER). All subunits are required for a maximal enzyme activity. Probably as part of the N-glycosylation pathway, plays a role in the regulation of tissue growth and apoptosis. This chain is Dolichyl-diphosphooligosaccharide--protein glycosyltransferase subunit DAD1, found in Drosophila melanogaster (Fruit fly).